The sequence spans 853 residues: Aminotransferase PigE (853 aa).

A pyridoxal 5'-phosphate-binding site is contributed by 503–504 (GT). Lys645 is subject to N6-(pyridoxal phosphate)lysine. Thr680 is a pyridoxal 5'-phosphate binding site.

Belongs to the class-III pyridoxal-phosphate-dependent aminotransferase family. In terms of assembly, homodimer. It depends on pyridoxal 5'-phosphate as a cofactor.

It functions in the pathway antibiotic biosynthesis; prodigiosin biosynthesis. Involved in the biosynthesis of 2-methyl-3-n-amyl-pyrrole (MAP), one of the terminal products involved in the biosynthesis of the red antibiotic prodigiosin (Pig). Catalyzes the transamination to the aldehyde group of 3-acetyloctanal, resulting in an aminoketone, which spontaneously cyclizes to yield the dihydro form of MAP (H2MAP). The polypeptide is Aminotransferase PigE (Serratia sp. (strain FS14)).